The chain runs to 188 residues: Elongation factor P (188 aa).

The protein belongs to the elongation factor P family.

It localises to the cytoplasm. The protein operates within protein biosynthesis; polypeptide chain elongation. In terms of biological role, involved in peptide bond synthesis. Stimulates efficient translation and peptide-bond synthesis on native or reconstituted 70S ribosomes in vitro. Probably functions indirectly by altering the affinity of the ribosome for aminoacyl-tRNA, thus increasing their reactivity as acceptors for peptidyl transferase. The protein is Elongation factor P of Wolbachia pipientis wMel.